The chain runs to 428 residues: Gamma-glutamyl phosphate reductase (428 aa).

It belongs to the gamma-glutamyl phosphate reductase family.

It is found in the cytoplasm. The catalysed reaction is L-glutamate 5-semialdehyde + phosphate + NADP(+) = L-glutamyl 5-phosphate + NADPH + H(+). It functions in the pathway amino-acid biosynthesis; L-proline biosynthesis; L-glutamate 5-semialdehyde from L-glutamate: step 2/2. Catalyzes the NADPH-dependent reduction of L-glutamate 5-phosphate into L-glutamate 5-semialdehyde and phosphate. The product spontaneously undergoes cyclization to form 1-pyrroline-5-carboxylate. This Treponema pallidum (strain Nichols) protein is Gamma-glutamyl phosphate reductase.